The following is a 237-amino-acid chain: Ribosomal RNA small subunit methyltransferase G (237 aa).

S-adenosyl-L-methionine is bound by residues G76, F81, 99–101 (DSS), 128–129 (IE), and R147.

This sequence belongs to the methyltransferase superfamily. RNA methyltransferase RsmG family.

The protein localises to the cytoplasm. In terms of biological role, specifically methylates the N7 position of a guanine in 16S rRNA. The protein is Ribosomal RNA small subunit methyltransferase G of Prochlorococcus marinus (strain MIT 9312).